Here is a 213-residue protein sequence, read N- to C-terminus: Ribonuclease HII (213 aa).

The region spanning 25–213 (KTLCGVDEAG…FKPVKQLLPH (189 aa)) is the RNase H type-2 domain. Residues D31, E32, and D124 each coordinate a divalent metal cation.

The protein belongs to the RNase HII family. Mn(2+) serves as cofactor. Mg(2+) is required as a cofactor.

The protein localises to the cytoplasm. The catalysed reaction is Endonucleolytic cleavage to 5'-phosphomonoester.. Its function is as follows. Endonuclease that specifically degrades the RNA of RNA-DNA hybrids. This Magnetococcus marinus (strain ATCC BAA-1437 / JCM 17883 / MC-1) protein is Ribonuclease HII.